The chain runs to 467 residues: MSSSYNTIALSSTPTFLLSSAAAGPGPNNFNRQEAAMTMVQQQPTSSVAPPPKKRRNQPGNPNPDAEVIALSPKTIMATNRFLCEVCNKGFQREQNLQLHRRGHNLPWKLKQKSNKEVRRKVYLCPEPSCVHHDPARALGDLTGIKKHYYRKHGEKKWKCDKCSKRYAVQSDWKAHSKTCGTKEYRCDCGTIFSRRDSYITHRAFCDALIQESARNPTVSFTAMAAGGGGGARHGFYGGASSALSHNHFGNNPNSGFTPLAAAGYNLNRSSSDKFEDFVPQATNPNPGPTNFLMQCSPNQGLLAQNNQSLMNHHGLISLGDNNNNNHNFFNLAYFQDTKNSDQTGVPSLFTNGADNNGPSALLRGLTSSSSSSVVVNDFGDCDHGNLQGLMNSLAATTDQQGRSPSLFDLHFANNLSMGGSDRLTLDFLGVNGGIVSTVNGRGGRSGGPPLDAEMKFSHPNHPYGKA.

Residues 1–20 (MSSSYNTIALSSTPTFLLSS) constitute a chloroplast transit peptide. The segment at 38–65 (TMVQQQPTSSVAPPPKKRRNQPGNPNPD) is disordered. Positions 39-48 (MVQQQPTSSV) are enriched in polar residues. S72 carries the phosphoserine modification. 2 consecutive C2H2-type zinc fingers follow at residues 82-104 (FLCE…RRGH) and 123-153 (YLCP…YRKH). The C2H2-type 2; degenerate zinc-finger motif lies at 158-181 (WKCDKCSKRYAVQSDWKAHSKTCG). Residues C160, C163, H176, C180, C187, C189, H202, and C206 each contribute to the Zn(2+) site. The segment at 185-208 (YRCDCGTIFSRRDSYITHRAFCDA) adopts a CCHC-type 2; atypical zinc-finger fold. The SHR-binding stretch occupies residues 195–207 (RRDSYITHRAFCD). Residues 440–467 (NGRGGRSGGPPLDAEMKFSHPNHPYGKA) are disordered.

It is found in the plastid. The protein resides in the chloroplast. Functionally, probable transcription factor. The chain is Protein indeterminate-domain 6, chloroplastic from Arabidopsis thaliana (Mouse-ear cress).